The sequence spans 501 residues: Glycogenin-2 (501 aa).

UDP is bound by residues Leu-42, Thr-44, Asn-45, Tyr-48, and Arg-110. UDP-alpha-D-glucose contacts are provided by Leu-42, Thr-44, Asn-45, Tyr-48, Arg-110, Lys-119, Asp-135, Ala-136, Asp-137, Asn-166, Ser-167, Asp-193, Asp-196, and Gln-197. UDP-binding residues include Asp-135, Ala-136, and Asp-137. Asp-135 lines the Mn(2+) pocket. Asp-137 contributes to the Mn(2+) binding site. The O-linked (Glc...) tyrosine glycan is linked to Tyr-228. UDP contacts are provided by His-245, Gly-248, and Lys-251. His-245 contacts Mn(2+). 2 residues coordinate UDP-alpha-D-glucose: Gly-248 and Lys-251. 3 positions are modified to phosphoserine: Ser-368, Ser-399, and Ser-459.

As to quaternary structure, homodimer, tightly complexed to glycogen synthase. Mn(2+) is required as a cofactor. Self-glycosylated by the transfer of glucose residues from UDP-glucose to itself, forming an alpha-1,4-glycan of around 10 residues attached to Tyr-228. As to expression, detected in liver (at protein level). Expressed preferentially in liver, heart, and pancreas.

It localises to the cytoplasm. The protein localises to the nucleus. It catalyses the reaction L-tyrosyl-[glycogenin] + UDP-alpha-D-glucose = alpha-D-glucosyl-L-tyrosyl-[glycogenin] + UDP + H(+). It carries out the reaction [1,4-alpha-D-glucosyl](n)-L-tyrosyl-[glycogenin] + UDP-alpha-D-glucose = [1,4-alpha-D-glucosyl](n+1)-L-tyrosyl-[glycogenin] + UDP + H(+). Its pathway is glycan biosynthesis; glycogen biosynthesis. Functionally, glycogenin participates in the glycogen biosynthetic process along with glycogen synthase and glycogen branching enzyme. It catalyzes the formation of a short alpha (1,4)-glucosyl chain covalently attached via a glucose 1-O-tyrosyl linkage to internal tyrosine residues and these chains act as primers for the elongation reaction catalyzed by glycogen synthase. The sequence is that of Glycogenin-2 (GYG2) from Homo sapiens (Human).